A 450-amino-acid chain; its full sequence is Proline--tRNA ligase (450 aa).

Belongs to the class-II aminoacyl-tRNA synthetase family. ProS type 2 subfamily. Homodimer.

The protein localises to the cytoplasm. It carries out the reaction tRNA(Pro) + L-proline + ATP = L-prolyl-tRNA(Pro) + AMP + diphosphate. Catalyzes the attachment of proline to tRNA(Pro) in a two-step reaction: proline is first activated by ATP to form Pro-AMP and then transferred to the acceptor end of tRNA(Pro). The protein is Proline--tRNA ligase of Paracoccus denitrificans (strain Pd 1222).